A 437-amino-acid polypeptide reads, in one-letter code: Lipopolysaccharide biosynthesis protein RfbH (437 aa).

It belongs to the DegT/DnrJ/EryC1 family. Pyridoxal 5'-phosphate serves as cofactor.

The protein operates within bacterial outer membrane biogenesis; LPS O-antigen biosynthesis. The polypeptide is Lipopolysaccharide biosynthesis protein RfbH (rfbH) (Salmonella typhimurium (strain LT2 / SGSC1412 / ATCC 700720)).